The chain runs to 96 residues: Non-specific lipid-transfer protein 2 (96 aa).

Residues 1 to 27 (MMRKLAVLVLAVAMVAACGGGVVGVAG) form the signal peptide. Disulfide bonds link Cys30–Cys62, Cys38–Cys52, Cys53–Cys88, and Cys64–Cys95.

Its function is as follows. Transfer lipids across membranes. May play a role in plant defense or in the biosynthesis of cuticle layers. The sequence is that of Non-specific lipid-transfer protein 2 (LTP-2) from Oryza sativa subsp. japonica (Rice).